The chain runs to 129 residues: MCCMASIDCLPDELLVGILSFILTNEAASTSILSKRWRTLFAFSHNLDCNDSIFCHPRKNKRKSFRYFLYKTLANLEGYSRIKKLSLKFDEKSNIREGHGKLVVNHWICNALEHGVSELHLCFEYMGWY.

The 47-residue stretch at 4 to 50 (MASIDCLPDELLVGILSFILTNEAASTSILSKRWRTLFAFSHNLDCN) folds into the F-box domain.

The sequence is that of Putative F-box protein At3g42722 from Arabidopsis thaliana (Mouse-ear cress).